The following is a 516-amino-acid chain: 7-chloro-L-tryptophan 6-halogenase KtzR (516 aa).

Residues Gly6, Thr8, Ala9, Glu42, and Ala43 each coordinate FAD. Lys71 is an active-site residue. Position 195 (Val195) interacts with FAD. Chloride contacts are provided by Thr357 and Gly358. Ile359 is an FAD binding site.

This sequence belongs to the flavin-dependent halogenase family. Bacterial tryptophan halogenase subfamily.

It catalyses the reaction 7-chloro-L-tryptophan + FADH2 + chloride + O2 = 6,7-dichloro-L-tryptophan + FAD + 2 H2O. Involved in the biosynthesis of kutznerides, actinomycete-derived antifungal and antimicrobial cyclic hexadepsipeptides. Together with KtzQ, catalyzes the regiospecific dichlorination of L-tryptophan (L-Trp) to produce 6,7-dichloro-L-tryptophan. KtzR catalyzes the chlorination of 7-chloro-L-tryptophan at C6 position to yield 6,7-dichloro-L-tryptophan. Can also use L-Trp as substrate and form 6-chloro-L-tryptophan, but has a 120-fold preference for 7-chloro-L-tryptophan over L-Trp. Cannot use piperazic acid or gamma,delta-dehydropiperazic acid. The chain is 7-chloro-L-tryptophan 6-halogenase KtzR from Kutzneria sp. (strain 744).